Here is a 285-residue protein sequence, read N- to C-terminus: Orotidine 5'-phosphate decarboxylase (285 aa).

Substrate is bound by residues D40, 62-64 (KTH), 93-102 (DRKFVDIGST), Y235, and R253. The active-site Proton donor is K95.

It belongs to the OMP decarboxylase family.

It catalyses the reaction orotidine 5'-phosphate + H(+) = UMP + CO2. It functions in the pathway pyrimidine metabolism; UMP biosynthesis via de novo pathway; UMP from orotate: step 2/2. This is Orotidine 5'-phosphate decarboxylase (URA3) from Paracoccidioides brasiliensis.